The following is a 182-amino-acid chain: MSMKGKETMSNEKIVVGKFGATYGIRGWLKVFSYTDNAESIFDYSPWFINQKGTWVEYKVESWKRHNKGMVAKLEGLDIREDAHLLTNFEIAIDPAVLPELSEDEFYWRELFGMQVVTTKGYDLGVVSDILETGSNDVLVVKANLKDAFGQKERLIPFLEEQVIIKVDREAQRIEVDWDPGF.

The PRC barrel domain maps to 103–182; sequence EDEFYWRELF…RIEVDWDPGF (80 aa).

It belongs to the RimM family. In terms of assembly, binds ribosomal protein uS19.

The protein localises to the cytoplasm. Its function is as follows. An accessory protein needed during the final step in the assembly of 30S ribosomal subunit, possibly for assembly of the head region. Essential for efficient processing of 16S rRNA. May be needed both before and after RbfA during the maturation of 16S rRNA. It has affinity for free ribosomal 30S subunits but not for 70S ribosomes. The polypeptide is Ribosome maturation factor RimM (Vibrio campbellii (strain ATCC BAA-1116)).